We begin with the raw amino-acid sequence, 785 residues long: Terminal nucleotidyltransferase 4A (785 aa).

Residues 56-184 (AAGRAAPAAG…QFHPGRRKRE (129 aa)) form a disordered region. The span at 68-85 (GPAPAASSPPPAPGPAAL) shows a compositional bias: pro residues. Low complexity-rich tracts occupy residues 86-98 (PPAL…PAAD) and 106-145 (SPSL…AGSG). Mg(2+) is bound by residues aspartate 290 and aspartate 292. ATP contacts are provided by glycine 353, lysine 378, serine 396, and tyrosine 397. A PAP-associated domain is found at 421–480 (NLGMLLVEFFELYGRNFNYLKTGIRIKEGGAYIAKEEIMKAMTSGYRPSMLCIEDPLLPG). Residues asparagine 481 and arginine 485 each coordinate ATP. A compositionally biased stretch (low complexity) spans 593–611 (PQLLSSGSSASSVSSLSGS). 2 disordered regions span residues 593-625 (PQLL…TPSV) and 731-785 (KGSH…SLSR). A compositionally biased stretch (basic residues) spans 757 to 774 (RGHHQYNRTGWRRKKHAH).

This sequence belongs to the DNA polymerase type-B-like family. In terms of assembly, component of a nuclear TRAMP-like complex, an ATP-dependent exosome regulatory complex consisting of a helicase (MTREX), an oligadenylate polymerase (TENT4B or TENT4A), and a substrate specific RNA-binding factor (ZCCHC7 or ZCCHC8). Several TRAMP-like complexes exist with specific compositions and are associated with nuclear, or nucleolar RNA exosomes. It depends on Mg(2+) as a cofactor. Mn(2+) serves as cofactor.

The protein resides in the cytoplasm. It localises to the nucleus. Its subcellular location is the nucleoplasm. It catalyses the reaction RNA(n) + ATP = RNA(n)-3'-adenine ribonucleotide + diphosphate. Its function is as follows. Terminal nucleotidyltransferase that catalyzes preferentially the transfer of ATP and GTP on RNA 3' poly(A) tail creating a heterogeneous 3' poly(A) tail leading to mRNAs stabilization by protecting mRNAs from active deadenylation. Also functions as a catalytic subunit of a TRAMP-like complex which has a poly(A) RNA polymerase activity and is involved in a post-transcriptional quality control mechanism. Polyadenylation with short oligo(A) tails is required for the degradative activity of the exosome on several of its nuclear RNA substrates. Has no terminal uridylyltransferase activity, and does not play a role in replication-dependent histone mRNA degradation via uridylation. This chain is Terminal nucleotidyltransferase 4A, found in Mus musculus (Mouse).